The primary structure comprises 319 residues: Inositol phosphoceramide mannosyltransferase 1 (319 aa).

Residues 8-28 form a helical membrane-spanning segment; that stretch reads LLLKGIPICGVILLILWGYSL. N-linked (GlcNAc...) asparagine glycosylation is found at N115 and N198. 2 consecutive transmembrane segments (helical) span residues 211–231 and 279–299; these read PTVFLSAGPLFLSYQFCKYLL and VLFFAFLAAFAILFLCLRVVF.

Belongs to the glycosyltransferase 32 family.

It localises to the golgi apparatus. Its subcellular location is the cis-Golgi network membrane. It is found in the trans-Golgi network membrane. Its function is as follows. With imt2 and imt3, is required for the synthesis of mannosyl phosphorylinositol ceramide (MIPC). Catalyzes the addition of mannosyl to phosphorylinositol ceramide (IPC). MIPC is essential for cell morphology, cell-surface distribution of ergosterol, localization for plasma-membrane transporters, and lipid-raft-mediated endocytosis of plasma membrane proteins to the vacuole. The protein is Inositol phosphoceramide mannosyltransferase 1 (imt1) of Schizosaccharomyces pombe (strain 972 / ATCC 24843) (Fission yeast).